Consider the following 1383-residue polypeptide: DNA-directed RNA polymerase subunit beta'' (1383 aa).

Residues C220, C289, C296, and C299 each contribute to the Zn(2+) site.

This sequence belongs to the RNA polymerase beta' chain family. RpoC2 subfamily. As to quaternary structure, in plastids the minimal PEP RNA polymerase catalytic core is composed of four subunits: alpha, beta, beta', and beta''. When a (nuclear-encoded) sigma factor is associated with the core the holoenzyme is formed, which can initiate transcription. Zn(2+) is required as a cofactor.

It is found in the plastid. The protein resides in the chloroplast. The catalysed reaction is RNA(n) + a ribonucleoside 5'-triphosphate = RNA(n+1) + diphosphate. DNA-dependent RNA polymerase catalyzes the transcription of DNA into RNA using the four ribonucleoside triphosphates as substrates. The chain is DNA-directed RNA polymerase subunit beta'' from Oenothera parviflora (Small-flowered evening primrose).